The sequence spans 797 residues: Sodium/hydrogen exchanger 4 (797 aa).

The Cytoplasmic segment spans residues 1–13 (MGPAMFMAFRLWN). An intramembrane region (name=A/M1) is located at residues 14–28 (WLLLLAVLTRSEATS). Residues 29 to 69 (YVNESSNPTAQQAPDARFAASSSDPDEGISVFELDYDYVQI) lie on the Cytoplasmic side of the membrane. Positions 32–52 (ESSNPTAQQAPDARFAASSSD) are disordered. The name=B/M2 intramembrane region spans 70-90 (PYEVTLWILLASLAKIGFHLY). At 91-94 (HRLP) the chain is on the cytoplasmic side. A helical transmembrane segment spans residues 95 to 114 (HLMPESCLLIIVGALVGGII). Residues 115 to 127 (FGTHHKSPPVMDS) are Extracellular-facing. The helical transmembrane segment at 128–148 (SIYFLYLLPPIVLESGYFMPT) threads the bilayer. At 149 to 154 (RPFFEN) the chain is on the cytoplasmic side. A helical transmembrane segment spans residues 155 to 175 (IGSILWWAGLGALINAFGIGL). The Extracellular segment spans residues 176–194 (SLYFICQIKAFGLGDINLL). Residues 195 to 215 (HNLLFGSLISAVDPVAVLAVF) traverse the membrane as a helical segment. Residues 216–226 (EEARVNEQLYM) lie on the Cytoplasmic side of the membrane. The chain crosses the membrane as a helical span at residues 227-247 (MIFGEALLNDGISVVLYNILI). Residues 248 to 270 (AFTKMHKFEDIEAVDILAGCARF) are Extracellular-facing. The helical transmembrane segment at 271–291 (VIVGCGGVFFGIIFGFISAFI) threads the bilayer. At 292–304 (TRFTQNISAIEPL) the chain is on the cytoplasmic side. Residues 305 to 325 (IVFMFSYLSYLAAETLYLSGI) traverse the membrane as a helical segment. Residues 326-352 (LAITACAVTMKKYVEENVSQTSYTTIK) are Extracellular-facing. An N-linked (GlcNAc...) asparagine glycan is attached at Asn-342. The chain crosses the membrane as a helical span at residues 353 to 373 (YFMKMLSSVSETLIFIFMGVS). Residues 374-384 (TIGKNHEWNWA) are Cytoplasmic-facing. Residues 385 to 405 (FICFTLLFCQIWRAISVFTLF) traverse the membrane as a helical segment. Residues 406–420 (YVSNQFRTFPFSIKD) lie on the Extracellular side of the membrane. Positions 421–441 (QFIIFYSGVRGAGSFSLAFLL) form an intramembrane region, name=L. Residues 442–450 (PLSLFPRKK) lie on the Extracellular side of the membrane. The chain crosses the membrane as a helical span at residues 451-471 (LFVTATLVVTYFTVFFQGITI). Over 472-797 (GPLVRYLDVR…KSHSPLLHRK (326 aa)) the chain is Cytoplasmic. The segment covering 759-769 (YDSGEQTEEET) has biased composition (acidic residues). The disordered stretch occupies residues 759 to 797 (YDSGEQTEEETSAILSRWTAEHRHSTEHHKSHSPLLHRK). Over residues 783–797 (STEHHKSHSPLLHRK) the composition is skewed to basic residues.

Belongs to the monovalent cation:proton antiporter 1 (CPA1) transporter (TC 2.A.36) family. In terms of assembly, homodimer; each protomer has one site for sodium and one site for proton binding. Interacts with CHP1 and CHP2. Post-translationally, may be phosphorylated. As to expression, expressed in kidney. Expressed in uterus and endometrial epithelial cells. Expressed in the inner segments of inner medullary collecting ducts (IMCD) in kidney. Expressed in AGTR1-positive neurons in organum vasculosum of the lamina terminalis (at protein level).

It localises to the basolateral cell membrane. Its subcellular location is the apical cell membrane. The protein localises to the zymogen granule membrane. It catalyses the reaction Na(+)(in) + H(+)(out) = Na(+)(out) + H(+)(in). The catalysed reaction is Na(+)(out) + NH4(+)(in) = Na(+)(in) + NH4(+)(out). Its activity is regulated as follows. Up-regulated in response to high extracellular sodium concentration. Functionally, electroneutral antiporter that exchanges sodium for protons or ammonium ions at the basolateral membrane of epithelia to regulate cell volume and intracellular pH upon hypertonic conditions. As part of transcellular ammonia transport in renal tubules, mediates basolateral ammonium extrusion in the medullary thick ascending limb, regulating the corticopapillary ammonium gradient and overall renal acid excretion. Mediates sodium:proton exchange in gastric parietal cells secondary to cAMP-dependent acid secretion and hyperosmolarity. Possibly coupled to chloride:bicarbonate antiporter, enables loading of parietal cells with sodium and chloride ions to maintain cell volume and normal gastric acid secretion. Functions as a sodium sensor in neurons of organum vasculosum of the lamina terminalis where it regulates water intake in response to increased sodium concentration in body fluids. This Mus musculus (Mouse) protein is Sodium/hydrogen exchanger 4 (Slc9a4).